The chain runs to 300 residues: NAD kinase (300 aa).

Residue aspartate 80 is the Proton acceptor of the active site. NAD(+) contacts are provided by residues 80 to 81 (DG), 154 to 155 (ND), arginine 165, arginine 182, aspartate 184, 195 to 200 (TAYALS), and glutamine 253.

The protein belongs to the NAD kinase family. A divalent metal cation is required as a cofactor.

The protein localises to the cytoplasm. The enzyme catalyses NAD(+) + ATP = ADP + NADP(+) + H(+). In terms of biological role, involved in the regulation of the intracellular balance of NAD and NADP, and is a key enzyme in the biosynthesis of NADP. Catalyzes specifically the phosphorylation on 2'-hydroxyl of the adenosine moiety of NAD to yield NADP. This chain is NAD kinase, found in Aromatoleum aromaticum (strain DSM 19018 / LMG 30748 / EbN1) (Azoarcus sp. (strain EbN1)).